The chain runs to 189 residues: Protein jagunal homolog (189 aa).

The Cytoplasmic portion of the chain corresponds to 1 to 34 (MSSRGVRAAGTDGNDFQNRQRIAQHYQESAQYKS). A helical membrane pass occupies residues 35–55 (VLKWFFVPHFLILVFMWLKVG). Over 56–75 (SEFLRYNFGWKNAFFERLDM) the chain is Lumenal. A helical membrane pass occupies residues 76-96 (PAAYPWEYVWCLSFIPIVLAL). Residues 97 to 105 (SSFQRNKLK) lie on the Cytoplasmic side of the membrane. A helical transmembrane segment spans residues 106–126 (VLHYAYYAEFICGIFPCMIGL). The Lumenal segment spans residues 127–150 (GGQLPELLEYANDMEGSNTPTFKG). Residues 151–171 (IFPMVIIWYIFFAVALQIHGF) form a helical membrane-spanning segment. At 172–189 (SMYFMHHLAAAWAPVKRD) the chain is on the cytoplasmic side.

It belongs to the jagunal family.

Its subcellular location is the endoplasmic reticulum membrane. The protein is Protein jagunal homolog of Caenorhabditis briggsae.